A 341-amino-acid chain; its full sequence is Thymidine kinase (341 aa).

19–26 is a binding site for ATP; it reads GAYGIGKT. Glu48 serves as the catalytic Proton acceptor. Substrate-binding residues include Tyr66 and Gln90. Arg183 provides a ligand contact to ATP. Arg189 lines the substrate pocket.

This sequence belongs to the herpesviridae thymidine kinase family. As to quaternary structure, homodimer.

It carries out the reaction thymidine + ATP = dTMP + ADP + H(+). Functionally, catalyzes the transfer of the gamma-phospho group of ATP to thymidine to generate dTMP in the salvage pathway of pyrimidine synthesis. The dTMP serves as a substrate for DNA polymerase during viral DNA replication. Allows the virus to be reactivated and to grow in non-proliferative cells lacking a high concentration of phosphorylated nucleic acid precursors. The chain is Thymidine kinase from Varicella-zoster virus (strain Dumas) (HHV-3).